The chain runs to 300 residues: 2-oxoglutarate-dependent dioxygenase DAO (300 aa).

The Fe2OG dioxygenase domain maps to 149–252 (WPCQFRMNRY…VSIAMFLLAP (104 aa)). Positions 173, 175, and 232 each coordinate Fe cation. 2-oxoglutarate is bound at residue R242.

It belongs to the iron/ascorbate-dependent oxidoreductase family. The cofactor is Fe(2+).

2-oxoglutarate-dependent dioxygenase essential for auxin catabolism and maintenance of auxin homeostasis in reproductive organs. Catalyzes the irreversible oxidation of indole-3-acetic acid (IAA) to the biologically inactive 2-oxoindole-3-acetic acid (OxIAA). In Oryza sativa subsp. indica (Rice), this protein is 2-oxoglutarate-dependent dioxygenase DAO (DAO).